Reading from the N-terminus, the 229-residue chain is Urease accessory protein UreF (229 aa).

The protein belongs to the UreF family. As to quaternary structure, ureD, UreF and UreG form a complex that acts as a GTP-hydrolysis-dependent molecular chaperone, activating the urease apoprotein by helping to assemble the nickel containing metallocenter of UreC. The UreE protein probably delivers the nickel.

It localises to the cytoplasm. In terms of biological role, required for maturation of urease via the functional incorporation of the urease nickel metallocenter. The polypeptide is Urease accessory protein UreF (Staphylococcus aureus (strain JH1)).